We begin with the raw amino-acid sequence, 897 residues long: 3'-5' exonuclease DinG (897 aa).

The 154-residue stretch at 8–161 (VVDLETTGNQ…DEDAATTAKL (154 aa)) folds into the Exonuclease domain. Positions 241–496 (SKAVDQLGLT…KAIDQLEKQR (256 aa)) constitute a Helicase ATP-binding domain. 276–283 (ASLGSGKS) provides a ligand contact to ATP. A DEAH box motif is present at residues 448–451 (DEAH). The Helicase C-terminal domain maps to 703–893 (NIDEYVASIV…QFGKLLRQIQ (191 aa)).

It belongs to the helicase family. DinG subfamily. Type 2 sub-subfamily.

3'-5' exonuclease. The sequence is that of 3'-5' exonuclease DinG from Staphylococcus aureus (strain MSSA476).